The sequence spans 252 residues: O-methyltransferase hkm8 (252 aa).

S-adenosyl-L-methionine contacts are provided by residues E73, 75-76, S81, and D100; that span reads GT.

It belongs to the class I-like SAM-binding methyltransferase superfamily. Cation-dependent O-methyltransferase family.

The protein operates within secondary metabolite biosynthesis. Functionally, O-methyltransferase; part of the gene cluster that mediates the biosynthesis of hancockiamides, an unusual new family of N-cinnamoylated piperazines. The NRPS hkm10 and the NmrA-like reductase hkm9 are proposed to convert two molecules of L-Phe to the intermediary piperazine called xenocockiamide A. Xenocockiamide A is then converted to hancockiamide D via a series of hydroxylations and O-methylations. The tyrosinase hkm6 may catalyze an aromatic hydroxylation, then the 2-oxoglutarate-dependent Fe(II) dioxygenase hkm4 and the FAD-dependent phenol hydroxylase hkm7 may catalyze consecutive hydroxylations to install 2 more hydroxy groups, and the methyltransferase hkm8 probably catalyzes two methylations using 2 molecules of S-adenosyl-L-methionine (SAM). The NRPS hkm11 activates and transfers trans-cinnamate supplied by the PAL hkm12 to hancockiamide D and produces hancockiamide A. NRPS Hkm11 has the flexibility to tolerate the bulky hancockiamide G as a substrate and the absence of the acetyl-transferase hkm3 opens up the opportunity for hkm11 to introduce a second N-cinnamoyl moiety. The cytochrome P450 monooxygenase hkm5 catalyzes the methylenedioxy bridge formation, converting hancockiamide A into hancockiamide G. Hkm5 can also convert hancockiamide B into hancockiamide C, and hancockiamide D into hancockiamide H. The N-acetyltransferase hkm3 finally transfers an acetyl group to 1-N of piperazine, converting hancockiamide A into hancockiamide B and hancockiamide G into hancockiamide C. The polypeptide is O-methyltransferase hkm8 (Aspergillus hancockii).